Reading from the N-terminus, the 133-residue chain is Putative N-acetylgalactosamine permease IIC component 2 (133 aa).

Residues 1–2 lie on the Cytoplasmic side of the membrane; that stretch reads ME. Residues 1 to 133 form the PTS EIIC type-4 domain; that stretch reads MEISLLQAFA…CDLATNPRRI (133 aa). The helical transmembrane segment at 3-23 threads the bilayer; it reads ISLLQAFALGIIAFIAGLDMF. The Periplasmic segment spans residues 24 to 32; that stretch reads NGLTHMHRP. A helical membrane pass occupies residues 33 to 53; it reads VVLGPLVGLVLGDLHTGILTG. At 54 to 65 the chain is on the cytoplasmic side; sequence GTLELVWMGLAP. A helical transmembrane segment spans residues 66–86; it reads LAGAQPPNVIIGTIVGTAFAI. Residues 87–93 lie on the Periplasmic side of the membrane; it reads TTGVKPD. Residues 94–114 traverse the membrane as a helical segment; it reads VAVGVAVPFAVAVQMGITFLF. At 115–133 the chain is on the cytoplasmic side; it reads SVMSGVMSRCDLATNPRRI.

The protein localises to the cell inner membrane. The phosphoenolpyruvate-dependent sugar phosphotransferase system (PTS), a major carbohydrate active -transport system, catalyzes the phosphorylation of incoming sugar substrates concomitant with their translocation across the cell membrane. This system is involved in N-acetylgalactosamine transport. The polypeptide is Putative N-acetylgalactosamine permease IIC component 2 (agaW) (Escherichia coli (strain K12)).